A 297-amino-acid polypeptide reads, in one-letter code: Malonyl-[acyl-carrier protein] O-methyltransferase (297 aa).

This sequence belongs to the methyltransferase superfamily.

The catalysed reaction is malonyl-[ACP] + S-adenosyl-L-methionine = malonyl-[ACP] methyl ester + S-adenosyl-L-homocysteine. The protein operates within cofactor biosynthesis; biotin biosynthesis. Converts the free carboxyl group of a malonyl-thioester to its methyl ester by transfer of a methyl group from S-adenosyl-L-methionine (SAM). It allows to synthesize pimeloyl-ACP via the fatty acid synthetic pathway. The chain is Malonyl-[acyl-carrier protein] O-methyltransferase from Laribacter hongkongensis (strain HLHK9).